The chain runs to 372 residues: Pepsin A (372 aa).

Positions 1–42 (MSVVKIPLVKKKSLRQNLIENGKLKEFMRTHKYNLGSKYIRE) are cleaved as a propeptide — activation peptide. The region spanning 60–369 (YFGTIGIGTP…DRGNNQIGLA (310 aa)) is the Peptidase A1 domain. Asp78 is an active-site residue. A disulfide bond links Cys91 and Cys96. Phosphoserine is present on Ser114. An intrachain disulfide couples Cys252 to Cys256. Asp261 is an active-site residue. The cysteines at positions 295 and 328 are disulfide-linked.

Belongs to the peptidase A1 family.

It localises to the secreted. The enzyme catalyses Preferential cleavage: hydrophobic, preferably aromatic, residues in P1 and P1' positions. Cleaves 1-Phe-|-Val-2, 4-Gln-|-His-5, 13-Glu-|-Ala-14, 14-Ala-|-Leu-15, 15-Leu-|-Tyr-16, 16-Tyr-|-Leu-17, 23-Gly-|-Phe-24, 24-Phe-|-Phe-25 and 25-Phe-|-Tyr-26 bonds in the B chain of insulin.. In terms of biological role, shows particularly broad specificity; although bonds involving phenylalanine and leucine are preferred, many others are also cleaved to some extent. The sequence is that of Pepsin A (PGA) from Bos taurus (Bovine).